Here is a 357-residue protein sequence, read N- to C-terminus: N-acetyl-gamma-glutamyl-phosphate reductase (357 aa).

Cysteine 151 is an active-site residue.

The protein belongs to the NAGSA dehydrogenase family. Type 1 subfamily.

It localises to the cytoplasm. The catalysed reaction is N-acetyl-L-glutamate 5-semialdehyde + phosphate + NADP(+) = N-acetyl-L-glutamyl 5-phosphate + NADPH + H(+). The protein operates within amino-acid biosynthesis; L-arginine biosynthesis; N(2)-acetyl-L-ornithine from L-glutamate: step 3/4. Functionally, catalyzes the NADPH-dependent reduction of N-acetyl-5-glutamyl phosphate to yield N-acetyl-L-glutamate 5-semialdehyde. The polypeptide is N-acetyl-gamma-glutamyl-phosphate reductase (Corynebacterium kroppenstedtii (strain DSM 44385 / JCM 11950 / CIP 105744 / CCUG 35717)).